A 446-amino-acid polypeptide reads, in one-letter code: AP-2 complex subunit mu (446 aa).

Phosphoserine is present on residues serine 145, serine 151, and serine 152. Threonine 157 is subject to Phosphothreonine. An MHD domain is found at 177–445 (KNSIYIDIVE…STRAGTCEIR (269 aa)).

The protein belongs to the adaptor complexes medium subunit family. In terms of assembly, adaptor protein complex 2 (AP-2) is a heterotetramer composed of two large adaptins (alpha-type subunit apl3 and beta-type subunit apl1), a medium chain (mu-type subunit apm4) and a small adaptin (sigma-type subunit aps2).

The protein localises to the cell membrane. The protein resides in the membrane. It localises to the coated pit. Component of the adaptor complexes which link clathrin to receptors in coated vesicles. Clathrin-associated protein complexes are believed to interact with the cytoplasmic tails of membrane proteins, leading to their selection and concentration. AP50 is a subunit of the plasma membrane adaptor (Potential). This Schizosaccharomyces pombe (strain 972 / ATCC 24843) (Fission yeast) protein is AP-2 complex subunit mu (apm4).